The sequence spans 517 residues: Synaptic vesicular amine transporter (517 aa).

At 1-20 the chain is on the cytoplasmic side; it reads MALSDLVLLRWLRDSRHSRK. The helical transmembrane segment at 21–41 threads the bilayer; sequence LILFIVFLALLLDNMLLTVVV. Over 42-132 the chain is Extracellular; that stretch reads PIIPSYLYSI…EDKDLLNENV (91 aa). 5 N-linked (GlcNAc...) asparagine glycosylation sites follow: Asn56, Asn83, Asn84, Asn91, and Asn113. The tract at residues 100–119 is disordered; sequence ESPKATTTQHTVTNTTVPPD. Positions 105 to 115 are enriched in low complexity; the sequence is TTTQHTVTNTT. The cysteines at positions 120 and 327 are disulfide-linked. Residues 133 to 153 traverse the membrane as a helical segment; that stretch reads QVGLLFASKATVQLLTNPFIG. Residues 154–162 are Cytoplasmic-facing; that stretch reads LLTNRIGYP. The chain crosses the membrane as a helical span at residues 163–183; that stretch reads IPMFAGFCIMFISTVMFAFSS. Over 184–192 the chain is Extracellular; that stretch reads SYAFLLIAR. The chain crosses the membrane as a helical span at residues 193–213; sequence SLQGIGSSCSSVAGMGMLASV. At 214–222 the chain is on the cytoplasmic side; sequence YTDDEERGN. The helical transmembrane segment at 223–245 threads the bilayer; that stretch reads AMGIALGGLAMGVLVGPPFGSVL. 2 residues coordinate serotonin: Leu231 and Val235. The Extracellular portion of the chain corresponds to 246–251; that stretch reads YEFVGK. A helical transmembrane segment spans residues 252–274; the sequence is TAPFLVLAALVLLDGAIQLFVLQ. Topologically, residues 275-294 are cytoplasmic; the sequence is PSRVQPESQKGTPLTTLLKD. The helical transmembrane segment at 295–314 threads the bilayer; sequence PYILIAAGSICFANMGIAML. Serotonin-binding residues include Asn308, Ile311, Glu315, Phe337, and Tyr344. At 315 to 331 the chain is on the extracellular side; sequence EPALPIWMMETMCSRKW. The helical transmembrane segment at 332-355 threads the bilayer; that stretch reads QLGVAFLPASISYLIGTNIFGILA. At 356–360 the chain is on the cytoplasmic side; the sequence is HKMGR. A helical transmembrane segment spans residues 361 to 381; the sequence is WLCALLGMIVVGISILCIPFA. Residues 382 to 392 lie on the Extracellular side of the membrane; the sequence is KNIYGLIAPNF. Residues 393–413 traverse the membrane as a helical segment; the sequence is GVGFAIGMVDSSMMPIMGYLV. Asp402 lines the serotonin pocket. Over 414–417 the chain is Cytoplasmic; the sequence is DLRH. The helical transmembrane segment at 418-438 threads the bilayer; that stretch reads VSVYGSVYAIADVAFCMGYAI. Residue Tyr436 participates in serotonin binding. The Extracellular segment spans residues 439–443; sequence GPSAG. The helical transmembrane segment at 444 to 465 threads the bilayer; it reads GAIAKAIGFPWLMTIIGIIDIV. The Cytoplasmic segment spans residues 466 to 517; sequence FAPLCFFLRSPPAKEEKMAILMDHNCPIKTKMYTQNNVQPYPVGDDEESESD. Phosphoserine; by CK2 is present on residues Ser514 and Ser516.

This sequence belongs to the major facilitator superfamily. Vesicular transporter family. In terms of assembly, interacts with SLC6A3. Expressed in striata and substantia nigra.

The protein localises to the cytoplasmic vesicle. It localises to the secretory vesicle. Its subcellular location is the synaptic vesicle membrane. The protein resides in the secretory vesicle membrane. It is found in the cell projection. The protein localises to the axon. It localises to the dendrite. It catalyses the reaction serotonin(in) + 2 H(+)(out) = serotonin(out) + 2 H(+)(in). The catalysed reaction is dopamine(in) + 2 H(+)(out) = dopamine(out) + 2 H(+)(in). It carries out the reaction histamine(in) + 2 H(+)(out) = histamine(out) + 2 H(+)(in). Its activity is regulated as follows. Strongly inhibited by reserpine and tetrabenazine. Also inhibited to a lesser extent by ketanserin and fenfluramine. Reserpine and ketanserin inhibit by blocking the substrate-binding pocket. Tetrabenazine traps SLC18A2/VMAT2 in an occluded conformation and its inhibition is specific to SLC18A2/VMAT2 but not SLC18A1/VMAT1. In terms of biological role, electrogenic antiporter that exchanges one cationic monoamine with two intravesicular protons across the membrane of secretory and synaptic vesicles. Uses the electrochemical proton gradient established by the V-type proton-pump ATPase to accumulate high concentrations of monoamines inside the vesicles prior to their release via exocytosis. Transports a variety of catecholamines such as dopamine, adrenaline and noradrenaline, histamine, and indolamines such as serotonin. Regulates the transvesicular monoaminergic gradient that determines the quantal size. Mediates somatodendritic dopamine release in hippocampal neurons, likely as part of a regulated secretory pathway that integrates retrograde synaptic signals. Acts as a primary transporter for striatal dopamine loading ensuring impulse-dependent release of dopamine at the synaptic cleft. Responsible for histamine and serotonin storage and subsequent corelease from mast cell granules. This chain is Synaptic vesicular amine transporter (Slc18a2), found in Mus musculus (Mouse).